The sequence spans 271 residues: TIP41-like protein (271 aa).

Position 106 is an N6-acetyllysine (lysine 106). An interaction with PPP2CA region spans residues 173-271; it reads RVMPSSFFLL…PVDSESAPSE (99 aa). Phosphoserine occurs at positions 265 and 270.

Belongs to the TIP41 family. Interacts with PPP2CA. Interacts with PPP2CB, PPP4C and PPP6C. Interacts with IGBP1; the interaction is dependent on PPP2CA. Associates with a protein phosphatase 2A PP2A(C):IGBP1 complex. Interacts with PPP4C and PPP4R2.

It localises to the cytoplasm. Functionally, may be a allosteric regulator of serine/threonine-protein phosphatase 2A (PP2A). Inhibits catalytic activity of the PP2A(D) core complex in vitro. The PP2A(C):TIPRL complex does not show phosphatase activity. Acts as a negative regulator of serine/threonine-protein phosphatase 4 probably by inhibiting the formation of the active PPP4C:PPP4R2 complex; the function is proposed to implicate it in DNA damage response by promoting H2AX phosphorylated on Ser-140 (gamma-H2AX). May play a role in the regulation of ATM/ATR signaling pathway controlling DNA replication and repair. The sequence is that of TIP41-like protein (Tiprl) from Rattus norvegicus (Rat).